The sequence spans 549 residues: Glucose-6-phosphate isomerase (549 aa).

Glutamate 355 (proton donor) is an active-site residue. Active-site residues include histidine 386 and lysine 514.

It belongs to the GPI family.

The protein localises to the cytoplasm. The catalysed reaction is alpha-D-glucose 6-phosphate = beta-D-fructose 6-phosphate. It participates in carbohydrate biosynthesis; gluconeogenesis. The protein operates within carbohydrate degradation; glycolysis; D-glyceraldehyde 3-phosphate and glycerone phosphate from D-glucose: step 2/4. Catalyzes the reversible isomerization of glucose-6-phosphate to fructose-6-phosphate. The protein is Glucose-6-phosphate isomerase of Desulfatibacillum aliphaticivorans.